The following is a 137-amino-acid chain: Phosphatidylinositol N-acetylglucosaminyltransferase subunit P (137 aa).

2 helical membrane-spanning segments follow: residues 16–36 (VYGF…LIWG) and 58–78 (MAMP…YIGL).

This sequence belongs to the PIGP family.

The protein localises to the membrane. It catalyses the reaction a 1,2-diacyl-sn-glycero-3-phospho-(1D-myo-inositol) + UDP-N-acetyl-alpha-D-glucosamine = a 6-(N-acetyl-alpha-D-glucosaminyl)-1-(1,2-diacyl-sn-glycero-3-phospho)-1D-myo-inositol + UDP + H(+). It functions in the pathway glycolipid biosynthesis; glycosylphosphatidylinositol-anchor biosynthesis. Its function is as follows. Part of the complex catalyzing the transfer of N-acetylglucosamine from UDP-N-acetylglucosamine to phosphatidylinositol, the first step of GPI biosynthesis. In Arabidopsis thaliana (Mouse-ear cress), this protein is Phosphatidylinositol N-acetylglucosaminyltransferase subunit P.